Consider the following 274-residue polypeptide: Shikimate dehydrogenase (NADP(+)) (274 aa).

Residues 14 to 16 and threonine 61 contribute to the shikimate site; that span reads SKS. Lysine 65 (proton acceptor) is an active-site residue. Glutamate 77 provides a ligand contact to NADP(+). Residues asparagine 86 and aspartate 102 each coordinate shikimate. NADP(+) contacts are provided by residues 126–130, 149–154, and methionine 212; these read GAGGA and NRTLEK. Tyrosine 214 is a shikimate binding site. Position 237 (glycine 237) interacts with NADP(+).

This sequence belongs to the shikimate dehydrogenase family. As to quaternary structure, homodimer.

The enzyme catalyses shikimate + NADP(+) = 3-dehydroshikimate + NADPH + H(+). Its pathway is metabolic intermediate biosynthesis; chorismate biosynthesis; chorismate from D-erythrose 4-phosphate and phosphoenolpyruvate: step 4/7. Its function is as follows. Involved in the biosynthesis of the chorismate, which leads to the biosynthesis of aromatic amino acids. Catalyzes the reversible NADPH linked reduction of 3-dehydroshikimate (DHSA) to yield shikimate (SA). The sequence is that of Shikimate dehydrogenase (NADP(+)) from Actinobacillus pleuropneumoniae serotype 5b (strain L20).